Consider the following 142-residue polypeptide: Small ribosomal subunit protein uS12 (142 aa).

Positions 1–43 (MPTFNQLVRKGRKVIEKKSNSPALQKGFNSKKKKPTDVNSPQK) are disordered. Aspartate 102 bears the 3-methylthioaspartic acid mark.

This sequence belongs to the universal ribosomal protein uS12 family. In terms of assembly, part of the 30S ribosomal subunit. Contacts proteins S8 and S17. May interact with IF1 in the 30S initiation complex.

Functionally, with S4 and S5 plays an important role in translational accuracy. Interacts with and stabilizes bases of the 16S rRNA that are involved in tRNA selection in the A site and with the mRNA backbone. Located at the interface of the 30S and 50S subunits, it traverses the body of the 30S subunit contacting proteins on the other side and probably holding the rRNA structure together. The combined cluster of proteins S8, S12 and S17 appears to hold together the shoulder and platform of the 30S subunit. This Ruminiclostridium cellulolyticum (strain ATCC 35319 / DSM 5812 / JCM 6584 / H10) (Clostridium cellulolyticum) protein is Small ribosomal subunit protein uS12.